A 274-amino-acid chain; its full sequence is Diaminopimelate epimerase (274 aa).

Substrate-binding residues include Asn11, Gln44, and Asn64. The active-site Proton donor is the Cys73. Residues 74 to 75 (GN), Asn157, Asn190, and 208 to 209 (ER) contribute to the substrate site. Residue Cys217 is the Proton acceptor of the active site. 218-219 (GS) contacts substrate.

This sequence belongs to the diaminopimelate epimerase family. As to quaternary structure, homodimer.

The protein localises to the cytoplasm. The enzyme catalyses (2S,6S)-2,6-diaminopimelate = meso-2,6-diaminopimelate. Its pathway is amino-acid biosynthesis; L-lysine biosynthesis via DAP pathway; DL-2,6-diaminopimelate from LL-2,6-diaminopimelate: step 1/1. In terms of biological role, catalyzes the stereoinversion of LL-2,6-diaminopimelate (L,L-DAP) to meso-diaminopimelate (meso-DAP), a precursor of L-lysine and an essential component of the bacterial peptidoglycan. This chain is Diaminopimelate epimerase, found in Yersinia enterocolitica serotype O:8 / biotype 1B (strain NCTC 13174 / 8081).